The primary structure comprises 152 residues: ARL14 effector protein-like (152 aa).

The span at 1–16 (MTEPSQKNNSTQQELT) shows a compositional bias: polar residues. The tract at residues 1-27 (MTEPSQKNNSTQQELTNHLFPEKSSQI) is disordered.

The chain is ARL14 effector protein-like (Arl14epl) from Mus musculus (Mouse).